The following is a 457-amino-acid chain: MMEGQQHGEQLKRGLKNRHIQLIALGGAIGTGLFLGSASVIQSAGPGIILGYAIAGFIAFLIMRQLGEMVVEEPVAGSFSHFAYKYWGSFAGFASGWNYWVLYVLVAMAELTAVGKYIQFWYPEIPTWVSAAVFFVVINAINLTNVKVFGEMEFWFAIIKVIAVVAMIIFGGWLLFSGNGGPQASVSNLWDQGGFLPHGFTGLVMMMAIIMFSFGGLELVGITAAEADNPEQSIPKATNQVIYRILIFYIGSLAVLLSLMPWTRVTADTSPFVLIFHELGDTFVANALNIVVLTAALSVYNSCVYCNSRMLFGLAQQGNAPKALASVDKRGVPVNTILVSALVTALCVLINYLAPESAFGLLMALVVSALVINWAMISLAHMKFRRAKQEQGVVTRFPALLYPLGNWICLLFMAAVLVIMLMTPGMAISVYLIPVWLIVLGIGYLFKEKTAKAVKAH.

The Cytoplasmic segment spans residues 1 to 19; that stretch reads MMEGQQHGEQLKRGLKNRH. The helical transmembrane segment at 20 to 40 threads the bilayer; the sequence is IQLIALGGAIGTGLFLGSASV. Residues 41 to 42 are Periplasmic-facing; it reads IQ. Residues 43 to 63 traverse the membrane as a helical segment; that stretch reads SAGPGIILGYAIAGFIAFLIM. At 64-86 the chain is on the cytoplasmic side; that stretch reads RQLGEMVVEEPVAGSFSHFAYKY. Residues 87–107 form a helical membrane-spanning segment; sequence WGSFAGFASGWNYWVLYVLVA. Topologically, residues 108 to 117 are periplasmic; it reads MAELTAVGKY. The helical transmembrane segment at 118 to 138 threads the bilayer; it reads IQFWYPEIPTWVSAAVFFVVI. Residues 139–155 lie on the Cytoplasmic side of the membrane; that stretch reads NAINLTNVKVFGEMEFW. Residues 156 to 176 traverse the membrane as a helical segment; sequence FAIIKVIAVVAMIIFGGWLLF. Residues 177 to 201 lie on the Periplasmic side of the membrane; it reads SGNGGPQASVSNLWDQGGFLPHGFT. Residues 202–222 traverse the membrane as a helical segment; it reads GLVMMMAIIMFSFGGLELVGI. At 223–240 the chain is on the cytoplasmic side; sequence TAAEADNPEQSIPKATNQ. The chain crosses the membrane as a helical span at residues 241–261; the sequence is VIYRILIFYIGSLAVLLSLMP. Residues 262-271 lie on the Periplasmic side of the membrane; the sequence is WTRVTADTSP. Residues 272–292 traverse the membrane as a helical segment; it reads FVLIFHELGDTFVANALNIVV. Residues 293–333 are Cytoplasmic-facing; sequence LTAALSVYNSCVYCNSRMLFGLAQQGNAPKALASVDKRGVP. The chain crosses the membrane as a helical span at residues 334–354; it reads VNTILVSALVTALCVLINYLA. The Periplasmic portion of the chain corresponds to 355 to 358; the sequence is PESA. A helical transmembrane segment spans residues 359-379; sequence FGLLMALVVSALVINWAMISL. The Cytoplasmic segment spans residues 380 to 399; that stretch reads AHMKFRRAKQEQGVVTRFPA. Residues 400-420 form a helical membrane-spanning segment; that stretch reads LLYPLGNWICLLFMAAVLVIM. The Periplasmic portion of the chain corresponds to 421–425; the sequence is LMTPG. Residues 426–446 form a helical membrane-spanning segment; it reads MAISVYLIPVWLIVLGIGYLF. The Cytoplasmic segment spans residues 447–457; that stretch reads KEKTAKAVKAH.

This sequence belongs to the amino acid-polyamine-organocation (APC) superfamily. Amino acid transporter (AAT) (TC 2.A.3.1) family.

The protein localises to the cell inner membrane. The enzyme catalyses L-phenylalanine(in) + H(+)(in) = L-phenylalanine(out) + H(+)(out). The catalysed reaction is L-tryptophan(in) + H(+)(in) = L-tryptophan(out) + H(+)(out). It catalyses the reaction L-tyrosine(in) + H(+)(in) = L-tyrosine(out) + H(+)(out). Its function is as follows. Permease that is involved in the active transport across the cytoplasmic membrane of all three aromatic amino acids, phenylalanine, tyrosine and tryptophan. This is Aromatic amino acid transport protein AroP (aroP) from Shigella flexneri.